A 144-amino-acid chain; its full sequence is Transcriptional regulator MraZ (144 aa).

SpoVT-AbrB domains lie at 4-47 and 77-120; these read EYKN…TADK and AQEI…DLKQ.

It belongs to the MraZ family. As to quaternary structure, forms oligomers.

It is found in the cytoplasm. Its subcellular location is the nucleoid. The polypeptide is Transcriptional regulator MraZ (Treponema denticola (strain ATCC 35405 / DSM 14222 / CIP 103919 / JCM 8153 / KCTC 15104)).